We begin with the raw amino-acid sequence, 1347 residues long: Spermatogenesis-associated protein 31A5 (1347 aa).

Residues 23–43 (PWVLDIFLTLVFALGFFFLLL) form a helical membrane-spanning segment. Disordered regions lie at residues 55 to 87 (PSPS…GREC), 106 to 233 (GPHL…RDST), 373 to 397 (EQDT…GPQK), 628 to 657 (DESP…KEAQ), 900 to 955 (RGIP…REAV), 1084 to 1161 (VHEE…PSVS), and 1313 to 1335 (KAVS…SHHH). Residues 60 to 82 (GKRKCPVGRRRRPRGRMKNHSLR) show a composition bias toward basic residues. Polar residues predominate over residues 165 to 178 (LASTPSPGPMTTSV). A compositionally biased stretch (pro residues) spans 198–211 (PEPPALFPHPPHTP). Polar residues-rich tracts occupy residues 631-651 (PGTS…STGE) and 927-948 (LTYS…SSKA). 2 stretches are compositionally biased toward basic and acidic residues: residues 1108-1127 (HKSE…RLEG) and 1137-1146 (RKTEDTHQDE).

Belongs to the SPATA31 family.

Its subcellular location is the membrane. Its function is as follows. May play a role in spermatogenesis. This is Spermatogenesis-associated protein 31A5 (SPATA31A5) from Homo sapiens (Human).